Consider the following 232-residue polypeptide: Ubiquinone biosynthesis O-methyltransferase (232 aa).

Arg36, Gly55, Asp76, and Leu120 together coordinate S-adenosyl-L-methionine.

Belongs to the methyltransferase superfamily. UbiG/COQ3 family.

The enzyme catalyses a 3-demethylubiquinol + S-adenosyl-L-methionine = a ubiquinol + S-adenosyl-L-homocysteine + H(+). It carries out the reaction a 3-(all-trans-polyprenyl)benzene-1,2-diol + S-adenosyl-L-methionine = a 2-methoxy-6-(all-trans-polyprenyl)phenol + S-adenosyl-L-homocysteine + H(+). It functions in the pathway cofactor biosynthesis; ubiquinone biosynthesis. Its function is as follows. O-methyltransferase that catalyzes the 2 O-methylation steps in the ubiquinone biosynthetic pathway. The protein is Ubiquinone biosynthesis O-methyltransferase of Dechloromonas aromatica (strain RCB).